The primary structure comprises 367 residues: (E)-2-epi-beta-caryophyllene synthase (367 aa).

Mg(2+) is bound by residues Asp93, Asn234, and Ser238. The DDXXE motif motif lies at 93 to 97 (DDIAE).

The protein belongs to the terpene synthase family. Mg(2+) serves as cofactor. Mn(2+) is required as a cofactor.

It catalyses the reaction (2E,6E)-farnesyl diphosphate = (E)-2-epi-beta-caryophyllene + diphosphate. It functions in the pathway secondary metabolite biosynthesis; terpenoid biosynthesis. Sesquiterpene synthase converting farnesyl diphosphate to (E)-2-epi-beta-caryophyllene as the major product, and to two other unidentified sesquiterpenes. Has no diterpene synthase activity. This Selaginella moellendorffii (Spikemoss) protein is (E)-2-epi-beta-caryophyllene synthase.